The following is a 197-amino-acid chain: RNA chaperone ProQ (197 aa).

A disordered region spans residues 115-138; it reads RAAAKKAQQKKHPRKPANKNLKKE. The segment covering 117 to 131 has biased composition (basic residues); sequence AAKKAQQKKHPRKPA.

Belongs to the ProQ family.

The protein localises to the cytoplasm. Its function is as follows. RNA chaperone with significant RNA binding, RNA strand exchange and RNA duplexing activities. The sequence is that of RNA chaperone ProQ from Haemophilus influenzae (strain ATCC 51907 / DSM 11121 / KW20 / Rd).